A 440-amino-acid polypeptide reads, in one-letter code: Endoglucanase B (440 aa).

The N-terminal stretch at 1 to 33 (MNKRLSRGKISLLASVFVTTTFMGGVNVLASTA) is a signal peptide. Glu179 acts as the Proton donor in catalysis. Catalysis depends on Glu305, which acts as the Nucleophile. The Dockerin domain maps to 381-440 (TSYSLGDVNKDGKVNAIDYAVLKSILLGTNTNVDLSVSDMNKDGKVNALDLAVLKKMLLS).

It belongs to the glycosyl hydrolase 5 (cellulase A) family.

The catalysed reaction is Endohydrolysis of (1-&gt;4)-beta-D-glucosidic linkages in cellulose, lichenin and cereal beta-D-glucans.. It carries out the reaction Endohydrolysis of (1-&gt;4)-beta-D-xylosidic linkages in xylans.. Has endoglucanase activity on carboxymethyl-cellulose (CMC), xylan and lichenan, but not Avicel. This Clostridium cellulovorans (strain ATCC 35296 / DSM 3052 / OCM 3 / 743B) protein is Endoglucanase B (engB).